Reading from the N-terminus, the 168-residue chain is Ribosome maturation factor RimM (168 aa).

A PRC barrel domain is found at 96-168; sequence EGDYYWTDLI…IIVVEWDADF (73 aa).

Belongs to the RimM family. In terms of assembly, binds ribosomal protein uS19.

It localises to the cytoplasm. In terms of biological role, an accessory protein needed during the final step in the assembly of 30S ribosomal subunit, possibly for assembly of the head region. Essential for efficient processing of 16S rRNA. May be needed both before and after RbfA during the maturation of 16S rRNA. It has affinity for free ribosomal 30S subunits but not for 70S ribosomes. In Coxiella burnetii (strain RSA 331 / Henzerling II), this protein is Ribosome maturation factor RimM.